We begin with the raw amino-acid sequence, 105 residues long: Large ribosomal subunit protein uL24 (105 aa).

Belongs to the universal ribosomal protein uL24 family. As to quaternary structure, part of the 50S ribosomal subunit.

One of two assembly initiator proteins, it binds directly to the 5'-end of the 23S rRNA, where it nucleates assembly of the 50S subunit. Functionally, one of the proteins that surrounds the polypeptide exit tunnel on the outside of the subunit. This chain is Large ribosomal subunit protein uL24, found in Thioalkalivibrio sulfidiphilus (strain HL-EbGR7).